The primary structure comprises 209 residues: Large ribosomal subunit protein uL4 (209 aa).

A disordered region spans residues 46–71 (GTSSTKTRSEVRGSSKKPWKQKGTGR). Basic residues predominate over residues 59 to 71 (SSKKPWKQKGTGR).

The protein belongs to the universal ribosomal protein uL4 family. In terms of assembly, part of the 50S ribosomal subunit.

Functionally, one of the primary rRNA binding proteins, this protein initially binds near the 5'-end of the 23S rRNA. It is important during the early stages of 50S assembly. It makes multiple contacts with different domains of the 23S rRNA in the assembled 50S subunit and ribosome. Its function is as follows. Forms part of the polypeptide exit tunnel. In Borrelia garinii subsp. bavariensis (strain ATCC BAA-2496 / DSM 23469 / PBi) (Borreliella bavariensis), this protein is Large ribosomal subunit protein uL4.